We begin with the raw amino-acid sequence, 296 residues long: MSQKKIDLVIVTGMSGAGKTVAIQSFEDLGYFTIDNMPPTLVPKFLEIIEQNNDNKRVALVVDMRSRTFFKEITLILDQIEQNFAIDFRILFLDATDNELVSRYKETRRSHPLAADGRVMDGIKLERELLAPLKSMSQNVVDTSDLTPRQLRQVITEQFSSDSNSASFRVEVMSFGFKYGIPLDADLVFDVRFLPNPYYLPELREKTGLDQEVYDYVMKHQESNDFYKHLVELILPILPGYQKEGKSLLTIAIGCTGGQHRSVAFAHRLAETVKKDWPVNESHRDKDKRKETVNRS.

ATP is bound at residue 13-20 (GMSGAGKT). A GTP-binding site is contributed by 63 to 66 (DMRS).

This sequence belongs to the RapZ-like family.

In terms of biological role, displays ATPase and GTPase activities. The chain is Nucleotide-binding protein SUB0630 from Streptococcus uberis (strain ATCC BAA-854 / 0140J).